Reading from the N-terminus, the 123-residue chain is Small ribosomal subunit protein uS8 (123 aa).

Belongs to the universal ribosomal protein uS8 family. In terms of assembly, part of the 30S ribosomal subunit. Contacts proteins S5 and S12.

One of the primary rRNA binding proteins, it binds directly to 16S rRNA central domain where it helps coordinate assembly of the platform of the 30S subunit. The chain is Small ribosomal subunit protein uS8 (rpsH) from Carsonella ruddii (strain PV).